Reading from the N-terminus, the 129-residue chain is Ribosome-binding factor A (129 aa).

It belongs to the RbfA family. As to quaternary structure, monomer. Binds 30S ribosomal subunits, but not 50S ribosomal subunits or 70S ribosomes.

It localises to the cytoplasm. One of several proteins that assist in the late maturation steps of the functional core of the 30S ribosomal subunit. Associates with free 30S ribosomal subunits (but not with 30S subunits that are part of 70S ribosomes or polysomes). Required for efficient processing of 16S rRNA. May interact with the 5'-terminal helix region of 16S rRNA. The protein is Ribosome-binding factor A of Pseudomonas aeruginosa (strain UCBPP-PA14).